Consider the following 252-residue polypeptide: Chitooligosaccharide deacetylase (252 aa).

Mg(2+) is bound by residues His-61 and His-125.

The protein belongs to the YdjC deacetylase family. ChbG subfamily. In terms of assembly, homodimer. The cofactor is Mg(2+).

The protein resides in the cytoplasm. It carries out the reaction N,N'-diacetylchitobiose + H2O = N-acetyl-beta-D-glucosaminyl-(1-&gt;4)-D-glucosamine + acetate. The catalysed reaction is diacetylchitobiose-6'-phosphate + H2O = N'-monoacetylchitobiose-6'-phosphate + acetate. It participates in glycan degradation; chitin degradation. Involved in the degradation of chitin. ChbG is essential for growth on the acetylated chitooligosaccharides chitobiose and chitotriose but is dispensable for growth on cellobiose and chitosan dimer, the deacetylated form of chitobiose. Deacetylation of chitobiose-6-P and chitotriose-6-P is necessary for both the activation of the chb promoter by the regulatory protein ChbR and the hydrolysis of phosphorylated beta-glucosides by the phospho-beta-glucosidase ChbF. Catalyzes the removal of only one acetyl group from chitobiose-6-P to yield monoacetylchitobiose-6-P, the inducer of ChbR and the substrate of ChbF. This is Chitooligosaccharide deacetylase from Shigella flexneri serotype 5b (strain 8401).